Here is a 269-residue protein sequence, read N- to C-terminus: tRNA (guanine-N(1)-)-methyltransferase (269 aa).

S-adenosyl-L-methionine is bound by residues G115 and 139 to 144 (LGDYVL).

This sequence belongs to the RNA methyltransferase TrmD family. Homodimer.

The protein resides in the cytoplasm. The catalysed reaction is guanosine(37) in tRNA + S-adenosyl-L-methionine = N(1)-methylguanosine(37) in tRNA + S-adenosyl-L-homocysteine + H(+). In terms of biological role, specifically methylates guanosine-37 in various tRNAs. This is tRNA (guanine-N(1)-)-methyltransferase from Pseudarthrobacter chlorophenolicus (strain ATCC 700700 / DSM 12829 / CIP 107037 / JCM 12360 / KCTC 9906 / NCIMB 13794 / A6) (Arthrobacter chlorophenolicus).